Consider the following 369-residue polypeptide: tRNA-specific 2-thiouridylase MnmA (369 aa).

ATP contacts are provided by residues 7–14 (GISGGVDS) and Met33. Residues 93-95 (NPD) form an interaction with target base in tRNA region. The Nucleophile role is filled by Cys98. A disulfide bridge links Cys98 with Cys195. Gly123 is a binding site for ATP. The tract at residues 145-147 (KDQ) is interaction with tRNA. The Cysteine persulfide intermediate role is filled by Cys195. The interval 307–308 (RY) is interaction with tRNA.

This sequence belongs to the MnmA/TRMU family. In terms of assembly, interacts with TusE.

The protein resides in the cytoplasm. It catalyses the reaction S-sulfanyl-L-cysteinyl-[protein] + uridine(34) in tRNA + AH2 + ATP = 2-thiouridine(34) in tRNA + L-cysteinyl-[protein] + A + AMP + diphosphate + H(+). Functionally, catalyzes the 2-thiolation of uridine at the wobble position (U34) of tRNA(Lys), tRNA(Glu) and tRNA(Gln), leading to the formation of s(2)U34, the first step of tRNA-mnm(5)s(2)U34 synthesis. Sulfur is provided by IscS, via a sulfur-relay system. Binds ATP and its substrate tRNAs. The chain is tRNA-specific 2-thiouridylase MnmA from Blochmanniella floridana.